Consider the following 406-residue polypeptide: ATPase ASNA1 homolog (406 aa).

21–28 (KGGVGKTT) lines the ATP pocket. D62 is a catalytic residue. E300 and N327 together coordinate ATP. Zn(2+) contacts are provided by C339 and C342.

This sequence belongs to the arsA ATPase family. In terms of assembly, homodimer.

It is found in the cytoplasm. The protein localises to the endoplasmic reticulum. Its function is as follows. ATPase required for the post-translational delivery of tail-anchored (TA) proteins to the endoplasmic reticulum. Recognizes and selectively binds the transmembrane domain of TA proteins in the cytosol. This complex then targets to the endoplasmic reticulum by membrane-bound receptors, where the tail-anchored protein is released for insertion. This process is regulated by ATP binding and hydrolysis. ATP binding drives the homodimer towards the closed dimer state, facilitating recognition of newly synthesized TA membrane proteins. ATP hydrolysis is required for insertion. Subsequently, the homodimer reverts towards the open dimer state, lowering its affinity for the membrane-bound receptor, and returning it to the cytosol to initiate a new round of targeting. The sequence is that of ATPase ASNA1 homolog from Leishmania braziliensis.